The primary structure comprises 139 residues: ATP synthase epsilon chain (139 aa).

This sequence belongs to the ATPase epsilon chain family. In terms of assembly, F-type ATPases have 2 components, CF(1) - the catalytic core - and CF(0) - the membrane proton channel. CF(1) has five subunits: alpha(3), beta(3), gamma(1), delta(1), epsilon(1). CF(0) has three main subunits: a, b and c.

It localises to the cell inner membrane. Functionally, produces ATP from ADP in the presence of a proton gradient across the membrane. This chain is ATP synthase epsilon chain, found in Actinobacillus pleuropneumoniae serotype 5b (strain L20).